A 394-amino-acid chain; its full sequence is 8-amino-7-oxononanoate synthase (394 aa).

Arg21 contributes to the substrate binding site. Residue 112 to 113 coordinates pyridoxal 5'-phosphate; that stretch reads GY. His137 contributes to the substrate binding site. Pyridoxal 5'-phosphate contacts are provided by Ser183, His211, and Thr239. N6-(pyridoxal phosphate)lysine is present on Lys242. Substrate is bound at residue Thr358.

The protein belongs to the class-II pyridoxal-phosphate-dependent aminotransferase family. BioF subfamily. In terms of assembly, homodimer. Requires pyridoxal 5'-phosphate as cofactor.

It catalyses the reaction 6-carboxyhexanoyl-[ACP] + L-alanine + H(+) = (8S)-8-amino-7-oxononanoate + holo-[ACP] + CO2. It participates in cofactor biosynthesis; biotin biosynthesis. In terms of biological role, catalyzes the decarboxylative condensation of pimeloyl-[acyl-carrier protein] and L-alanine to produce 8-amino-7-oxononanoate (AON), [acyl-carrier protein], and carbon dioxide. The chain is 8-amino-7-oxononanoate synthase from Burkholderia cenocepacia (strain ATCC BAA-245 / DSM 16553 / LMG 16656 / NCTC 13227 / J2315 / CF5610) (Burkholderia cepacia (strain J2315)).